Here is a 154-residue protein sequence, read N- to C-terminus: Pro-corazonin (154 aa).

The signal sequence occupies residues 1 to 19 (MLRLLLLPLFLFTLSMCMG). At Gln-20 the chain carries Pyrrolidone carboxylic acid. Asn-30 is modified (asparagine amide). A propeptide spanning residues 70–154 (LERCLSQLQR…SAEPNVFGKH (85 aa)) is cleaved from the precursor. A disordered region spans residues 91-119 (DFNANRVDPDPENSAHPRLSNSNGENVLY). A compositionally biased stretch (polar residues) spans 109-119 (LSNSNGENVLY).

This sequence belongs to the corazonin family. In terms of tissue distribution, from late embryo to larva, expression is consistently detected in three neuronal groups: dorso-lateral neurons (DL), dorso-medial neurons (DM), and neurons in the ventral nerve cord (vCrz). Both the vCrz and DM groups die via programmed cell death during metamorphosis, whereas the DL neurons persist to adulthood. In adults, expression is seen in a cluster of six to eight neurons per lobe in the pars lateralis (DLP), in numerous neuronal cells in the optic lobes, and in a novel group of four abdominal ganglionic neurons present only in males (ms-aCrz). Projections of the ms-aCrz neurons terminate within the ventral nerve cord, implying a role as interneurons. Terminals of the DLP neurons are found in the retrocerebral complex that produces juvenile hormone and adipokinetic hormone, located in the vicinity of terminals emanating from PDF-containing pacemaking neurons.

The protein resides in the secreted. Functionally, cardioactive peptide. Corazonin is probably involved in the physiological regulation of the heart beat. Clock (Clk) and cycle (cyc) proteins negatively regulate Crz transcription in a cell-specific manner. The sequence is that of Pro-corazonin (Crz) from Drosophila melanogaster (Fruit fly).